Here is a 58-residue protein sequence, read N- to C-terminus: Alpha-conotoxin-like Pu1.6 (58 aa).

Residues 1 to 17 form the signal peptide; it reads MFTVFLLVVLVTTVVFS. Positions 18-35 are excised as a propeptide; sequence TSDHRPASNHENRRASKR. Disulfide bonds link Cys-44/Cys-50 and Cys-45/Cys-58. Residues 46 to 48 are lacks the Ser-Xaa-Pro motif that is crucial for potent interaction with nAChR; it reads TNP.

The protein belongs to the conotoxin A superfamily. In terms of tissue distribution, expressed by the venom duct.

It is found in the secreted. In terms of biological role, alpha-conotoxins act on postsynaptic membranes, they bind to the nicotinic acetylcholine receptors (nAChR) and thus inhibit them. Has possibly a distinct nAChR binding mode from other alpha-conotoxins, due to a different three residue motif (lacks the Ser-Xaa-Pro motif). The sequence is that of Alpha-conotoxin-like Pu1.6 from Conus pulicarius (Flea-bitten cone).